The chain runs to 503 residues: ATP-dependent RNA helicase dbp3 (503 aa).

Residues methionine 1–glutamate 25 are compositionally biased toward basic and acidic residues. The tract at residues methionine 1–alanine 35 is disordered. The Q motif signature appears at serine 104–glutamine 112. Positions tryptophan 116–valine 292 constitute a Helicase ATP-binding domain. Alanine 129–threonine 136 is an ATP binding site. The DEAD box signature appears at aspartate 239–aspartate 242. Residues arginine 307–glycine 472 form the Helicase C-terminal domain.

Belongs to the DEAD box helicase family. DDX5/DBP2 subfamily.

It is found in the nucleus. The protein resides in the nucleolus. The catalysed reaction is ATP + H2O = ADP + phosphate + H(+). Its function is as follows. ATP-dependent RNA helicase required for 60S ribosomal subunit synthesis. Involved in efficient pre-rRNA processing, predominantly at site A3, which is necessary for the normal formation of 25S and 5.8S rRNAs. The protein is ATP-dependent RNA helicase dbp3 (dbp3) of Neosartorya fischeri (strain ATCC 1020 / DSM 3700 / CBS 544.65 / FGSC A1164 / JCM 1740 / NRRL 181 / WB 181) (Aspergillus fischerianus).